A 130-amino-acid chain; its full sequence is Small ribosomal subunit protein uS8 (130 aa).

It belongs to the universal ribosomal protein uS8 family. In terms of assembly, part of the 30S ribosomal subunit. Contacts proteins S5 and S12.

Functionally, one of the primary rRNA binding proteins, it binds directly to 16S rRNA central domain where it helps coordinate assembly of the platform of the 30S subunit. The protein is Small ribosomal subunit protein uS8 of Shewanella baltica (strain OS223).